A 481-amino-acid chain; its full sequence is Glutamyl-tRNA(Gln) amidotransferase subunit A (481 aa).

Residues K76 and S151 each act as charge relay system in the active site. Residue S175 is the Acyl-ester intermediate of the active site.

The protein belongs to the amidase family. GatA subfamily. In terms of assembly, heterotrimer of A, B and C subunits.

The catalysed reaction is L-glutamyl-tRNA(Gln) + L-glutamine + ATP + H2O = L-glutaminyl-tRNA(Gln) + L-glutamate + ADP + phosphate + H(+). Its function is as follows. Allows the formation of correctly charged Gln-tRNA(Gln) through the transamidation of misacylated Glu-tRNA(Gln) in organisms which lack glutaminyl-tRNA synthetase. The reaction takes place in the presence of glutamine and ATP through an activated gamma-phospho-Glu-tRNA(Gln). The chain is Glutamyl-tRNA(Gln) amidotransferase subunit A from Neisseria meningitidis serogroup C / serotype 2a (strain ATCC 700532 / DSM 15464 / FAM18).